A 155-amino-acid chain; its full sequence is Ribonuclease H (155 aa).

In terms of domain architecture, RNase H type-1 spans 5-146 (DQKPVIIHTD…ADQLARDGLT (142 aa)). Asp14, Glu52, Asp74, and Asp138 together coordinate Mg(2+). A disordered region spans residues 133–155 (ENERADQLARDGLTENRMKSRVK).

This sequence belongs to the RNase H family. As to quaternary structure, monomer. It depends on Mg(2+) as a cofactor.

Its subcellular location is the cytoplasm. It catalyses the reaction Endonucleolytic cleavage to 5'-phosphomonoester.. Its function is as follows. Endonuclease that specifically degrades the RNA of RNA-DNA hybrids. The sequence is that of Ribonuclease H from Rhodopseudomonas palustris (strain ATCC BAA-98 / CGA009).